The primary structure comprises 66 residues: MKPSDMRQLKAEDFQKEIDSRKKELMELRFQAAMGNLAQPHRVTQLRREVAQLNTIRGEQRAGEQK.

It belongs to the universal ribosomal protein uL29 family.

The chain is Large ribosomal subunit protein uL29 from Deinococcus deserti (strain DSM 17065 / CIP 109153 / LMG 22923 / VCD115).